A 275-amino-acid polypeptide reads, in one-letter code: 1-deoxy-11-beta-hydroxypentalenate dehydrogenase (275 aa).

An NAD(+)-binding site is contributed by 12-36 (GAASGIGLALSARFARAGAGVVMAD). Ser144 serves as a coordination point for substrate. The active-site Proton acceptor is the Tyr157. Lys161 contributes to the NAD(+) binding site.

The protein belongs to the short-chain dehydrogenases/reductases (SDR) family.

It catalyses the reaction 1-deoxy-11beta-hydroxypentalenate + NAD(+) = 1-deoxy-11-oxopentalenate + NADH + H(+). It functions in the pathway antibiotic biosynthesis; pentalenolactone biosynthesis. Its function is as follows. Catalyzes the oxidation of 1-deoxy-11-beta-hydroxypentalenic acid to 1-deoxy-11-oxopentalenic acid in the biosynthesis of pentalenolactone antibiotic. This is 1-deoxy-11-beta-hydroxypentalenate dehydrogenase (penF) from Streptomyces exfoliatus (Streptomyces hydrogenans).